The primary structure comprises 293 residues: MKKLTMESLSVYIFVMGVCFTSNFTCEQKIVLIQEHKLRSICISTCYVNGVLAGNSSCVSVKTSYLINLAMLTNGFKAMRVGNITSISEKTAFLRVIINYYFRGVMLRALIAQRLPNAANLSSTVNCWLDDHSAGGVMTLFYGTERIVLNSSTEINASRWISDGQDANGTLNILNERVSLDIYFLSKICPQLSSEIYKKKVAHPKYFSLIKNDTKPKKFLRNTWRSAWSNWYKYKEIKEFLDFSSDYENFSEITYSMSAAGLFFLAGGAFTMLLLLCCLSMITRKHIVKDLGY.

The signal sequence occupies residues 1–21 (MKKLTMESLSVYIFVMGVCFT). N-linked (GlcNAc...) asparagine; by host glycans are attached at residues Asn-23, Asn-55, Asn-83, Asn-120, Asn-150, Asn-156, Asn-168, Asn-212, and Asn-249. A helical membrane pass occupies residues 262–282 (LFFLAGGAFTMLLLLCCLSMI).

It belongs to the herpesviridae immediate early glycoprotein family.

It is found in the membrane. This is Putative immediate early glycoprotein (U18) from Human herpesvirus 6A (strain Uganda-1102) (HHV-6 variant A).